The following is a 308-amino-acid chain: Ribosomal RNA large subunit methyltransferase F (308 aa).

The protein belongs to the methyltransferase superfamily. METTL16/RlmF family.

Its subcellular location is the cytoplasm. It carries out the reaction adenosine(1618) in 23S rRNA + S-adenosyl-L-methionine = N(6)-methyladenosine(1618) in 23S rRNA + S-adenosyl-L-homocysteine + H(+). Functionally, specifically methylates the adenine in position 1618 of 23S rRNA. This chain is Ribosomal RNA large subunit methyltransferase F, found in Escherichia coli O17:K52:H18 (strain UMN026 / ExPEC).